Here is a 301-residue protein sequence, read N- to C-terminus: Ribosomal RNA small subunit methyltransferase H (301 aa).

S-adenosyl-L-methionine is bound by residues 25–27 (GGH), Asp45, Phe72, Asp94, and Gln101.

The protein belongs to the methyltransferase superfamily. RsmH family.

It is found in the cytoplasm. It carries out the reaction cytidine(1402) in 16S rRNA + S-adenosyl-L-methionine = N(4)-methylcytidine(1402) in 16S rRNA + S-adenosyl-L-homocysteine + H(+). Its function is as follows. Specifically methylates the N4 position of cytidine in position 1402 (C1402) of 16S rRNA. This Methylococcus capsulatus (strain ATCC 33009 / NCIMB 11132 / Bath) protein is Ribosomal RNA small subunit methyltransferase H.